The sequence spans 678 residues: uncharacterized protein (678 aa).

The next 2 membrane-spanning stretches (helical) occupy residues 14-34 (LMFA…WTGL) and 180-200 (GAVI…IGGF).

This sequence belongs to the mycobacterial PPE family.

The protein resides in the cell membrane. This is an uncharacterized protein from Mycobacterium tuberculosis (strain CDC 1551 / Oshkosh).